The chain runs to 229 residues: 2-C-methyl-D-erythritol 4-phosphate cytidylyltransferase (229 aa).

It belongs to the IspD/TarI cytidylyltransferase family. IspD subfamily. As to quaternary structure, homodimer.

The enzyme catalyses 2-C-methyl-D-erythritol 4-phosphate + CTP + H(+) = 4-CDP-2-C-methyl-D-erythritol + diphosphate. The protein operates within isoprenoid biosynthesis; isopentenyl diphosphate biosynthesis via DXP pathway; isopentenyl diphosphate from 1-deoxy-D-xylulose 5-phosphate: step 2/6. Catalyzes the formation of 4-diphosphocytidyl-2-C-methyl-D-erythritol from CTP and 2-C-methyl-D-erythritol 4-phosphate (MEP). The polypeptide is 2-C-methyl-D-erythritol 4-phosphate cytidylyltransferase (Wigglesworthia glossinidia brevipalpis).